A 335-amino-acid polypeptide reads, in one-letter code: Corrinoid adenosyltransferase PduO (335 aa).

His206 serves as a coordination point for heme.

It belongs to the Cob(I)alamin adenosyltransferase family. PduO subfamily. Forms a complex with PduS. Heme b serves as cofactor. It depends on Mg(2+) as a cofactor.

It is found in the bacterial microcompartment. It catalyses the reaction cob(I)alamin-[corrinoid adenosyltransferase] + ATP = apo-[corrinoid adenosyltransferase] + adenosylcob(III)alamin + triphosphate. The protein operates within polyol metabolism; 1,2-propanediol degradation. Its pathway is cofactor biosynthesis; adenosylcobalamin biosynthesis. Functionally, converts cob(I)alamin to adenosylcobalamin (adenosylcob(III)alamin), the cofactor for propanediol dehydratase. Found in the bacterial microcompartment (BMC) dedicated to 1,2-propanediol (1,2-PD) degradation. PduS and PduO allow regeneration of the adenosylcobalamin cofactor within the BMC. Expression of a cosmid containing the full 21-gene pdu operon in E.coli allows E.coli to grow on 1,2-propanediol (1,2-PD) with the appearance of bacterial microcompartments (BMC) in its cytoplasm. In terms of biological role, the 1,2-PD-specific bacterial microcompartment (BMC) concentrates low levels of 1,2-PD catabolic enzymes, concentrates volatile reaction intermediates thus enhancing pathway flux and keeps the level of toxic, mutagenic propionaldehyde low. The chain is Corrinoid adenosyltransferase PduO from Citrobacter freundii.